The following is a 209-amino-acid chain: Kynurenine formamidase (209 aa).

Trp18 serves as a coordination point for substrate. Zn(2+)-binding residues include His48, His52, and Asp54. His58 functions as the Proton donor/acceptor in the catalytic mechanism. Residues His160 and Glu172 each contribute to the Zn(2+) site.

It belongs to the Cyclase 1 superfamily. KynB family. As to quaternary structure, homodimer. Zn(2+) serves as cofactor.

It catalyses the reaction N-formyl-L-kynurenine + H2O = L-kynurenine + formate + H(+). Its pathway is amino-acid degradation; L-tryptophan degradation via kynurenine pathway; L-kynurenine from L-tryptophan: step 2/2. Catalyzes the hydrolysis of N-formyl-L-kynurenine to L-kynurenine, the second step in the kynurenine pathway of tryptophan degradation. The polypeptide is Kynurenine formamidase (Maricaulis maris (strain MCS10) (Caulobacter maris)).